A 1839-amino-acid chain; its full sequence is DNA-directed RNA polymerase II subunit RPB1 (1839 aa).

Zn(2+) contacts are provided by C66, C69, C76, H79, C106, C109, and C147. The disordered stretch occupies residues 152 to 174 (DIDDVQSHSTDEPVKKSRGGCGA). Residues 156–166 (VQSHSTDEPVK) show a composition bias toward basic and acidic residues. C172 contributes to the Zn(2+) binding site. A DNA-binding region spans residues 326-397 (TQKSGRPIKS…PETVTPYNIE (72 aa)). D495, D497, and D499 together coordinate Mg(2+). Residues 785 to 795 (GQQNVEGKRIP) form an alpha-amanitin binding region. The segment at 829–841 (PQEFFFHAMGGRE) is bridging helix. Positions 1538 to 1726 (PSSSPGYSPS…PSYGPTSPSY (189 aa)) are enriched in low complexity. The tract at residues 1538–1839 (PSSSPGYSPS…DASKDDKGNP (302 aa)) is disordered. 27 tandem repeats follow at residues 1544 to 1550 (YSPSSPG), 1551 to 1557 (YSPTSPG), 1558 to 1564 (YSPTSPG), 1565 to 1571 (YSPTSPG), 1572 to 1578 (YSPTSPT), 1579 to 1585 (YSPSSPG), 1586 to 1592 (YSPTSPA), 1593 to 1599 (YSPTSPS), 1600 to 1606 (YSPTSPS), 1607 to 1613 (YSPTSPS), 1614 to 1620 (YSPTSPS), 1621 to 1627 (YSPTSPS), 1628 to 1634 (YSPTSPS), 1635 to 1641 (YSPTSPA), 1642 to 1648 (YSPTSPA), 1649 to 1655 (YSPTSPA), 1656 to 1662 (YSPTSPS), 1663 to 1669 (YSPTSPS), 1670 to 1676 (YSPTSPS), 1677 to 1683 (YSPTSPS), 1684 to 1690 (YSPTSPS), 1691 to 1697 (YSPTSPA), 1698 to 1704 (YSPTSPG), 1705 to 1711 (YSPTSPS), 1712 to 1718 (YSPTSPS), 1719 to 1725 (YGPTSPS), and 1726 to 1732 (YNPQSAK). The segment at 1544-1813 (YSPSSPGYSP…LPGYSPSSTG (270 aa)) is C-terminal domain (CTD); 37 X 7 AA tandem approximate repeats of Y-[GNS]-P-[QST]-[LNS]-[APT]-[AGKNRSTY]. The segment covering 1727–1745 (NPQSAKYSPSIAYSPSNAR) has biased composition (polar residues). The stretch at 1733-1738 (YSPSIA) is one 28; approximate repeat. 6 tandem repeats follow at residues 1739–1745 (YSPSNAR), 1752–1758 (YSPTSPN), 1759–1765 (YSPTSPS), 1766–1772 (YSPTSPS), 1773–1779 (YSPSSPT), and 1780–1786 (YSPSSPY). Residues 1747–1798 (SPASPYSPTSPNYSPTSPSYSPTSPSYSPSSPTYSPSSPYSSGASPDYSPSA) show a composition bias toward low complexity. Residues 1794–1799 (YSPSAG) form a 35; approximate repeat. 2 consecutive repeat copies span residues 1800–1806 (YSPTLPG) and 1807–1813 (YSPSSTG). Positions 1818-1839 (HEGDKKDKTGKKDASKDDKGNP) are enriched in basic and acidic residues.

This sequence belongs to the RNA polymerase beta' chain family. As to quaternary structure, component of the RNA polymerase II (Pol II) complex consisting of at least 12 subunits. Interacts with RDM1. Interacts (via CTD) with PRP40A, PRP40B, PRP40C and CYP59. Interacts with MEE12/CCG1 and MEE14/CBP1. Binds (via CTD) to ATX1, especially when phosphorylated on 'Ser-5' of the heptapeptide repeat. In terms of processing, the tandem 7 residues repeats in the C-terminal domain (CTD) can be highly phosphorylated. The phosphorylation activates Pol II. Phosphorylation occurs mainly at residues 'Ser-2' and 'Ser-5' of the heptapeptide repeat. The phosphorylation state is believed to result from the balanced action of site-specific CTD kinases and phosphatase, and a 'CTD code' that specifies the position of Pol II within the transcription cycle has been proposed. ATX1 seems to regulate phosphorylation statment. 'Ser-2' and 'Ser-5' phosphorylation are repressed by flavopiridol (Flap) and seliciclib (Selic), inhibitors of CDK7 and CDK9.

It localises to the nucleus. It carries out the reaction RNA(n) + a ribonucleoside 5'-triphosphate = RNA(n+1) + diphosphate. DNA-dependent RNA polymerase catalyzes the transcription of DNA into RNA using the four ribonucleoside triphosphates as substrates. Largest and catalytic component of RNA polymerase II which synthesizes mRNA precursors and many functional non-coding RNAs. Forms the polymerase active center together with the second largest subunit. Pol II is the central component of the basal RNA polymerase II transcription machinery. It is composed of mobile elements that move relative to each other. NRPB1 is part of the core element with the central large cleft, the clamp element that moves to open and close the cleft and the jaws that are thought to grab the incoming DNA template. At the start of transcription, a single-stranded DNA template strand of the promoter is positioned within the central active site cleft of Pol II. A bridging helix emanates from NRPB1 and crosses the cleft near the catalytic site and is thought to promote translocation of Pol II by acting as a ratchet that moves the RNA-DNA hybrid through the active site by switching from straight to bent conformations at each step of nucleotide addition. During transcription elongation, Pol II moves on the template as the transcript elongates. Elongation is influenced by the phosphorylation status of the C-terminal domain (CTD) of Pol II largest subunit (NRPB1), which serves as a platform for assembly of factors that regulate transcription initiation, elongation, termination and mRNA processing. In Arabidopsis thaliana (Mouse-ear cress), this protein is DNA-directed RNA polymerase II subunit RPB1.